Here is a 200-residue protein sequence, read N- to C-terminus: 6,7-dimethyl-8-ribityllumazine synthase (200 aa).

Residues Trp-25, 59–61 (SWE), and 119–121 (VLI) contribute to the 5-amino-6-(D-ribitylamino)uracil site. 124-125 (ET) lines the (2S)-2-hydroxy-3-oxobutyl phosphate pocket. His-127 serves as the catalytic Proton donor. Phe-152 is a binding site for 5-amino-6-(D-ribitylamino)uracil. Residue Arg-166 coordinates (2S)-2-hydroxy-3-oxobutyl phosphate.

It belongs to the DMRL synthase family. Homopentamer.

The enzyme catalyses (2S)-2-hydroxy-3-oxobutyl phosphate + 5-amino-6-(D-ribitylamino)uracil = 6,7-dimethyl-8-(1-D-ribityl)lumazine + phosphate + 2 H2O + H(+). The protein operates within cofactor biosynthesis; riboflavin biosynthesis; riboflavin from 2-hydroxy-3-oxobutyl phosphate and 5-amino-6-(D-ribitylamino)uracil: step 1/2. In terms of biological role, catalyzes the formation of 6,7-dimethyl-8-ribityllumazine by condensation of 5-amino-6-(D-ribitylamino)uracil with 3,4-dihydroxy-2-butanone 4-phosphate. This is the penultimate step in the biosynthesis of riboflavin. This chain is 6,7-dimethyl-8-ribityllumazine synthase, found in Pyricularia oryzae (strain 70-15 / ATCC MYA-4617 / FGSC 8958) (Rice blast fungus).